Reading from the N-terminus, the 230-residue chain is Probable carboxylesterase Culp2 (230 aa).

Positions Met1–Ala32 form a signal peptide, tat-type signal. A disulfide bridge connects residues Cys45 and Cys112. The active-site Nucleophile is Ser123. Cys185 and Cys192 form a disulfide bridge. The active site involves Asp189. Residue His207 is the Proton donor/acceptor of the active site.

The protein belongs to the cutinase family. Predicted to be exported by the Tat system. The position of the signal peptide cleavage has not been experimentally proven.

The protein localises to the secreted. It localises to the cell surface. The protein is Probable carboxylesterase Culp2 (cut2) of Mycobacterium bovis (strain ATCC BAA-935 / AF2122/97).